A 562-amino-acid polypeptide reads, in one-letter code: MTRNSRPNIVLLMADDLGVGDLCCYGNNTVSTPNIDRLASEGVRLTQHLAAASVCTPSRAAFLTGRYPIRSGMASPYNLNRGLTWLGGSGGLPTNETTFAKLLQHYGYRTGLIGKWHQGLSCASRNDHCYHPLNHGFDYFYGLPFGLLSDCQASRTPELHRWLRIKLWISTAVLSLVPLLLLIPKYARWFVVPWKVILTFALLAFLFFISWYSSYGFTRRWNCILMRNHEIIQQPMREERVASLMLKEALAFIDRYKRGPFLLFVSFLHVHTPLITKDKFVGHSKYGLYGDNVEEMDWMVGKILETLDQERLTNHTLVYFTSDNGGRLEVQEGEVQLGGSNGIYKGGQGMGGWEGGIRVPGIFRWPTVLQAGKVINEPTSLMDIYPTLSYIGGGMLPQDRVIDGRNLMPLLEGRVSHSDHEFLFHYCGVYLHTARWHQKDCATVWKAHYVTPKFSPDGAGACYGSGICPCSGDVTYHDPPLLFDVSRDPSETRPLNPDNEALFDSVVKKIEAAIKEHRRTLTPVPQQFSVFNTLWKPWLQPCCGTFPFCGCDKEDDILSTAW.

Ca(2+) is bound by residues D15, D16, and C55. C55 acts as the Nucleophile in catalysis. At C55 the chain carries 3-oxoalanine (Cys). K115 serves as a coordination point for substrate. H117 is a catalytic residue. The next 2 helical transmembrane spans lie at 167-187 and 189-209; these read LWIS…PKYA and WFVV…LFFI. Residue H271 coordinates substrate. Residues D323 and N324 each coordinate Ca(2+).

It belongs to the sulfatase family. It depends on Ca(2+) as a cofactor. The conversion to 3-oxoalanine (also known as C-formylglycine, FGly), of a serine or cysteine residue in prokaryotes and of a cysteine residue in eukaryotes, is critical for catalytic activity.

The protein resides in the membrane. This is Arylsulfatase H (ARSH) from Canis lupus familiaris (Dog).